The following is a 660-amino-acid chain: MKLMIIESPGKIEKLSTILGDGWKIAASVGHVRDLPQKEMGVAAPDFKPSYELTERGEGVVAKLKNLLKQADSVYLATDPDREGEAISWHLQQCLKLSNPLRVTFNEITANAVKASLVAPRTIDVKRVAAQEARRVLDRLVGYMVSPELSRLTGKRLSAGRVQSPAVRLVVEREREIKAFKVTNHFGAMLFFADAKTSGEWSAEWLTKPKFVAEDNPYFMDRDFAAAVAQVKAVVVKSFDESEAKRSPPPPFTTSTMQQAASVTLGVDPKAAMDAAQKLYEQGHITYHRTDNPNVSDESLGDIYAVSVKLGLDIAEKPRKFKAPAGAQVGHPAVTPTHWEVEEAGETSDQKALYKLIRLRAIACQLADARYAVRTVRLEAAQPVGGKNVEFEARGRTLIYQGWLKLIAGDQTEEEDGNEKESSNPIPVCAPGECLDVARGKLLEKKTKPPSHYTQATLVKKLESEGIGRPATYAAIMDNIVSRGYVKTEKKYLFPTETGELIVDSLVGKFEFLDLGFTREIEESLDRIAQGESGYKAVIAKVHDQLNMELSTLQVSATPKHPCQECGKPLRRIPGKNGHFWGCSGYPDCSVTFPDEGGKPGQKKPVEVSNFACVKCGNPLKHLVKKGKGGYDFWGCSGFKEGCKATYEDKKGKPNFEKAK.

The Toprim domain occupies 1 to 110; that stretch reads MKLMIIESPG…LRVTFNEITA (110 aa). Residues Glu7 and Asp79 each coordinate Mg(2+). One can recognise a Topo IA-type catalytic domain in the interval 124 to 550; sequence DVKRVAAQEA…KVHDQLNMEL (427 aa). The tract at residues 158-163 is interaction with DNA; the sequence is SAGRVQ. Tyr287 serves as the catalytic O-(5'-phospho-DNA)-tyrosine intermediate. 2 consecutive C4-type zinc fingers follow at residues 563-589 and 613-643; these read CQEC…YPDC and CVKC…KEGC.

The protein belongs to the type IA topoisomerase family. In terms of assembly, monomer. Mg(2+) is required as a cofactor.

It catalyses the reaction ATP-independent breakage of single-stranded DNA, followed by passage and rejoining.. Releases the supercoiling and torsional tension of DNA, which is introduced during the DNA replication and transcription, by transiently cleaving and rejoining one strand of the DNA duplex. Introduces a single-strand break via transesterification at a target site in duplex DNA. The scissile phosphodiester is attacked by the catalytic tyrosine of the enzyme, resulting in the formation of a DNA-(5'-phosphotyrosyl)-enzyme intermediate and the expulsion of a 3'-OH DNA strand. The free DNA strand then undergoes passage around the unbroken strand, thus removing DNA supercoils. Finally, in the religation step, the DNA 3'-OH attacks the covalent intermediate to expel the active-site tyrosine and restore the DNA phosphodiester backbone. This is DNA topoisomerase I, plasmid from Xylella fastidiosa (strain 9a5c).